Reading from the N-terminus, the 575-residue chain is Interleukin-1 receptor-like 2 (575 aa).

An N-terminal signal peptide occupies residues 1–19; that stretch reads MWSLLLCGLSIALPLSVTA. 3 consecutive Ig-like C2-type domains span residues 20–111, 126–211, and 222–318; these read DGCK…VNLT, PNLS…VLNG, and YGGS…MCHA. Over 20–335 the chain is Extracellular; sequence DGCKDIFMKN…ILQLPAPDFR (316 aa). Residues asparagine 41, asparagine 59, asparagine 109, asparagine 127, asparagine 184, asparagine 234, asparagine 250, asparagine 266, and asparagine 299 are each glycosylated (N-linked (GlcNAc...) asparagine). An intrachain disulfide couples cysteine 42 to cysteine 95. Cysteines 146 and 195 form a disulfide. Cysteine 249 and cysteine 316 form a disulfide bridge. The chain crosses the membrane as a helical span at residues 336–356; that stretch reads AYLIGGLIALVAVAVSVVYIY. Residues 357–575 lie on the Cytoplasmic side of the membrane; it reads NIFKIDIVLW…RRKKCTLTTG (219 aa). The TIR domain occupies 381–536; that stretch reads KLYDAYVLYP…KFWKTVRYHM (156 aa). Residue glutamate 467 is part of the active site.

It belongs to the interleukin-1 receptor family. Interacts with IL1RAP; the association is enhanced by IL36B indicative for an functional signaling complex and inhibited by IL36RN. In terms of tissue distribution, expressed in synovial fibroblasts and articular chondrocytes. Expressed in keratinocytes and monocyte-derived dendritic cells. Expressed in monocytes and myeloid dendritic cells; at protein level.

It localises to the membrane. The enzyme catalyses NAD(+) + H2O = ADP-D-ribose + nicotinamide + H(+). Receptor for interleukin-36 (IL36A, IL36B and IL36G). After binding to interleukin-36 associates with the coreceptor IL1RAP to form the interleukin-36 receptor complex which mediates interleukin-36-dependent activation of NF-kappa-B, MAPK and other pathways. The IL-36 signaling system is thought to be present in epithelial barriers and to take part in local inflammatory response; it is similar to the IL-1 system. Seems to be involved in skin inflammatory response by induction of the IL-23/IL-17/IL-22 pathway. The sequence is that of Interleukin-1 receptor-like 2 (IL1RL2) from Homo sapiens (Human).